The chain runs to 184 residues: ATP synthase subunit b 1 (184 aa).

A helical transmembrane segment spans residues 36 to 55 (NILNLAILVGVLVFYGRKVV).

Belongs to the ATPase B chain family. F-type ATPases have 2 components, F(1) - the catalytic core - and F(0) - the membrane proton channel. F(1) has five subunits: alpha(3), beta(3), gamma(1), delta(1), epsilon(1). F(0) has four main subunits: a(1), b(1), b'(1) and c(10-14). The alpha and beta chains form an alternating ring which encloses part of the gamma chain. F(1) is attached to F(0) by a central stalk formed by the gamma and epsilon chains, while a peripheral stalk is formed by the delta, b and b' chains.

It localises to the cellular thylakoid membrane. F(1)F(0) ATP synthase produces ATP from ADP in the presence of a proton or sodium gradient. F-type ATPases consist of two structural domains, F(1) containing the extramembraneous catalytic core and F(0) containing the membrane proton channel, linked together by a central stalk and a peripheral stalk. During catalysis, ATP synthesis in the catalytic domain of F(1) is coupled via a rotary mechanism of the central stalk subunits to proton translocation. In terms of biological role, component of the F(0) channel, it forms part of the peripheral stalk, linking F(1) to F(0). This Crocosphaera subtropica (strain ATCC 51142 / BH68) (Cyanothece sp. (strain ATCC 51142)) protein is ATP synthase subunit b 1.